A 593-amino-acid chain; its full sequence is Zinc metalloproteinase-disintegrin-like atrase-B (593 aa).

The first 20 residues, 1-20 (MIQALLVIICLAVFPHQGSS), serve as a signal peptide directing secretion. Residues 21 to 191 (IILESGNVND…DESIEKTSQL (171 aa)) constitute a propeptide that is removed on maturation. One can recognise a Peptidase M12B domain in the interval 205 to 400 (KYIEFYVIVD…DRPQCILNKP (196 aa)). Positions 208 and 292 each coordinate Ca(2+). Cystine bridges form between cysteine 316–cysteine 395, cysteine 356–cysteine 379, and cysteine 358–cysteine 363. Asparagine 319 carries an N-linked (GlcNAc...) asparagine glycan. Histidine 341 contributes to the Zn(2+) binding site. Glutamate 342 is a catalytic residue. Residues histidine 345 and histidine 351 each coordinate Zn(2+). 8 residues coordinate Ca(2+): cysteine 395, asparagine 398, isoleucine 410, asparagine 413, phenylalanine 415, glutamate 417, glutamate 420, and aspartate 423. Positions 408–477 (PPICGNYFVE…ECPTDSLQRN (70 aa)) constitute a Disintegrin domain. 11 disulfides stabilise this stretch: cysteine 422/cysteine 435, cysteine 424/cysteine 430, cysteine 434/cysteine 440, cysteine 449/cysteine 469, cysteine 456/cysteine 488, cysteine 481/cysteine 493, cysteine 500/cysteine 550, cysteine 515/cysteine 558, cysteine 528/cysteine 538, cysteine 545/cysteine 581, and cysteine 575/cysteine 586. The D/ECD-tripeptide motif lies at 455–457 (DCD). Ca(2+) contacts are provided by aspartate 457, leucine 458, glutamate 460, and aspartate 472. The N-linked (GlcNAc...) asparagine glycan is linked to asparagine 490.

The protein belongs to the venom metalloproteinase (M12B) family. P-III subfamily. P-IIIa sub-subfamily. Monomer. Requires Zn(2+) as cofactor. As to expression, expressed by the venom gland.

It is found in the secreted. With respect to regulation, inhibited by EDTA, EGTA, 1,10-phenanthroline and DTT. Not inhibited by PMSF and SBTI. In terms of biological role, snake venom zinc protease that inhibits the classical and alternative pathways of complement by cleaving factor B, C6, C7, and C8. Also slowly and selectively degrades alpha-chain of fibrinogen (FGA), and shows edema-inducing activity. The chain is Zinc metalloproteinase-disintegrin-like atrase-B from Naja atra (Chinese cobra).